Reading from the N-terminus, the 239-residue chain is Large ribosomal subunit protein uL2 (239 aa).

Residues 200–239 (VNHPHGGKEHHIGRPSTVSRRAPPGRKVGHIAARRTGRRK) form a disordered region. The segment covering 222-239 (PPGRKVGHIAARRTGRRK) has biased composition (basic residues).

Belongs to the universal ribosomal protein uL2 family. Part of the 50S ribosomal subunit. Forms a bridge to the 30S subunit in the 70S ribosome.

In terms of biological role, one of the primary rRNA binding proteins. Required for association of the 30S and 50S subunits to form the 70S ribosome, for tRNA binding and peptide bond formation. It has been suggested to have peptidyltransferase activity; this is somewhat controversial. Makes several contacts with the 16S rRNA in the 70S ribosome. The chain is Large ribosomal subunit protein uL2 from Thermococcus kodakarensis (strain ATCC BAA-918 / JCM 12380 / KOD1) (Pyrococcus kodakaraensis (strain KOD1)).